The primary structure comprises 332 residues: Fructose-1,6-bisphosphatase class 1 1 (332 aa).

Positions 92, 115, 117, and 118 each coordinate Mg(2+). Residues 118–121, Asn-211, Tyr-244, 262–264, and Lys-274 each bind substrate; these read DGSS and YLY. Position 280 (Glu-280) interacts with Mg(2+).

It belongs to the FBPase class 1 family. As to quaternary structure, homotetramer. Requires Mg(2+) as cofactor.

The protein localises to the cytoplasm. It catalyses the reaction beta-D-fructose 1,6-bisphosphate + H2O = beta-D-fructose 6-phosphate + phosphate. Its pathway is carbohydrate biosynthesis; gluconeogenesis. The protein is Fructose-1,6-bisphosphatase class 1 1 of Christiangramia forsetii (strain DSM 17595 / CGMCC 1.15422 / KT0803) (Gramella forsetii).